Reading from the N-terminus, the 406-residue chain is Argininosuccinate synthase (406 aa).

ATP contacts are provided by residues 10–18 and A37; that span reads AYSGGLDTS. L-citrulline contacts are provided by Y88 and S93. Position 118 (G118) interacts with ATP. Positions 120, 124, and 125 each coordinate L-aspartate. N124 is an L-citrulline binding site. L-citrulline-binding residues include R128, S179, S188, E264, and Y276.

The protein belongs to the argininosuccinate synthase family. Type 1 subfamily. As to quaternary structure, homotetramer.

Its subcellular location is the cytoplasm. The catalysed reaction is L-citrulline + L-aspartate + ATP = 2-(N(omega)-L-arginino)succinate + AMP + diphosphate + H(+). It participates in amino-acid biosynthesis; L-arginine biosynthesis; L-arginine from L-ornithine and carbamoyl phosphate: step 2/3. This is Argininosuccinate synthase from Roseobacter denitrificans (strain ATCC 33942 / OCh 114) (Erythrobacter sp. (strain OCh 114)).